The following is a 444-amino-acid chain: Cell division cycle 20.4, cofactor of APC complex (444 aa).

Over residues 88–99 (LLSTNHSDSPHQ) the composition is skewed to polar residues. A disordered region spans residues 88–108 (LLSTNHSDSPHQNPKPVKPRR). WD repeat units follow at residues 124–161 (RDDFSLNLLDWGSANVLAIALGDTVYLWDASSGSTSEL), 166–205 (EDKGPVTSINWTQDGLDLAVGLDNSEVQLWDCVSNRQVRT), 209–246 (GHESRVGSLAWDNHILTTGGMDGKIVNNDVRIRSSIVE), 250–289 (GHTEEVCGLKWSESGNKQASGGNDNVVHIWDRSLASSKQT), 298–340 (EHTA…CLNS), 342–383 (ETGS…KMAE), and 386–425 (GHTSRVLFMAQSPNGCTVASAAGDENLRLWNVFGEPPKTT).

Belongs to the WD repeat CDC20/Fizzy family. The APC/C is composed of at least 11 subunits that stay tightly associated throughout the cell cycle.

The protein resides in the cytoplasm. Its pathway is protein modification; protein ubiquitination. Component of the anaphase promoting complex/cyclosome (APC/C), a cell cycle-regulated E3 ubiquitin-protein ligase complex that controls progression through mitosis and the G1 phase of the cell cycle. The sequence is that of Cell division cycle 20.4, cofactor of APC complex (CDC20-4) from Arabidopsis thaliana (Mouse-ear cress).